We begin with the raw amino-acid sequence, 475 residues long: 3-keto-steroid reductase ERG27 (475 aa).

4 residues coordinate NADP(+): isoleucine 32, isoleucine 55, threonine 59, and lysine 65. Catalysis depends on proton donor residues serine 249 and tyrosine 272. 4 residues coordinate NADP(+): tyrosine 272, lysine 276, valine 324, and serine 326. The active-site Lowers pKa of active site Tyr is lysine 276.

It belongs to the short-chain dehydrogenases/reductases (SDR) family. ERG27 subfamily. As to quaternary structure, heterotetramer of ERG25, ERG26, ERG27 and ERG28. ERG28 acts as a scaffold to tether ERG27 and other 4,4-demethylation-related enzymes, forming a demethylation enzyme complex, in the endoplasmic reticulum.

The protein localises to the endoplasmic reticulum membrane. Its subcellular location is the lipid droplet. Its pathway is steroid metabolism; ergosterol biosynthesis. Functionally, 3-keto-steroid reductase; part of the third module of ergosterol biosynthesis pathway that includes the late steps of the pathway. ERG27 is a catalytic component of the C-4 demethylation complex that catalyzes the conversion of 4,4-dimethylfecosterol into fecosterol via 4-methylfecosterol. The third module or late pathway involves the ergosterol synthesis itself through consecutive reactions that mainly occur in the endoplasmic reticulum (ER) membrane. Firstly, the squalene synthase ERG9 catalyzes the condensation of 2 farnesyl pyrophosphate moieties to form squalene, which is the precursor of all steroids. Squalene synthase is crucial for balancing the incorporation of farnesyl diphosphate (FPP) into sterol and nonsterol isoprene synthesis. Secondly, squalene is converted into lanosterol by the consecutive action of the squalene epoxidase ERG1 and the lanosterol synthase ERG7. Then, the delta(24)-sterol C-methyltransferase ERG6 methylates lanosterol at C-24 to produce eburicol. Eburicol is the substrate of the sterol 14-alpha demethylase encoded by CYP51A, CYP51B and CYP51C, to yield 4,4,24-trimethyl ergosta-8,14,24(28)-trienol. CYP51B encodes the enzyme primarily responsible for sterol 14-alpha-demethylation, and plays an essential role in ascospore formation. CYP51A encodes an additional sterol 14-alpha-demethylase, induced on ergosterol depletion and responsible for the intrinsic variation in azole sensitivity. The third CYP51 isoform, CYP51C, does not encode a sterol 14-alpha-demethylase, but is required for full virulence on host wheat ears. The C-14 reductase ERG24 then reduces the C14=C15 double bond which leads to 4,4-dimethylfecosterol. A sequence of further demethylations at C-4, involving the C-4 demethylation complex containing the C-4 methylsterol oxidases ERG25, the sterol-4-alpha-carboxylate 3-dehydrogenase ERG26 and the 3-keto-steroid reductase ERG27, leads to the production of fecosterol via 4-methylfecosterol. ERG28 has a role as a scaffold to help anchor ERG25, ERG26 and ERG27 to the endoplasmic reticulum. The C-8 sterol isomerase ERG2 then catalyzes the reaction which results in unsaturation at C-7 in the B ring of sterols and thus converts fecosterol to episterol. The sterol-C5-desaturases ERG3A and ERG3BB then catalyze the introduction of a C-5 double bond in the B ring to produce 5-dehydroepisterol. The C-22 sterol desaturases ERG5A and ERG5B further convert 5-dehydroepisterol into ergosta-5,7,22,24(28)-tetraen-3beta-ol by forming the C-22(23) double bond in the sterol side chain. Finally, ergosta-5,7,22,24(28)-tetraen-3beta-ol is substrate of the C-24(28) sterol reductase ERG4 to produce ergosterol. The protein is 3-keto-steroid reductase ERG27 of Gibberella zeae (strain ATCC MYA-4620 / CBS 123657 / FGSC 9075 / NRRL 31084 / PH-1) (Wheat head blight fungus).